The following is a 491-amino-acid chain: Cytochrome P450 2F5 (491 aa).

C436 contributes to the heme binding site.

This sequence belongs to the cytochrome P450 family. Heme serves as cofactor.

It localises to the endoplasmic reticulum membrane. The protein localises to the microsome membrane. The enzyme catalyses an organic molecule + reduced [NADPH--hemoprotein reductase] + O2 = an alcohol + oxidized [NADPH--hemoprotein reductase] + H2O + H(+). Cytochromes P450 are a group of heme-thiolate monooxygenases. In liver microsomes, this enzyme is involved in an NADPH-dependent electron transport pathway. It oxidizes a variety of structurally unrelated compounds, including steroids, fatty acids, and xenobiotics. This is Cytochrome P450 2F5 (CYP2F5) from Gorilla gorilla gorilla (Western lowland gorilla).